Reading from the N-terminus, the 1311-residue chain is MSATMSGSGSAPCRFAHYFIVCGLDDETGLEPDALAALYQWLEADRQGKDPEATAAGENFDQSPLKRTFKSKVLAHYPENIECNPFDQDAVNMLCMPKGLSFRTQRDSLAPHFHSFLITREDGSRTYGFVHTFYEEVTSPQICSAMQTLHQMHQAEHNTSAQNCTSSSSSSSSSSSSSSMDSLSSSLDDVDSPSAHGGRRTCEGYDSIRDTLYVSKAMCLIAPMPFMHACKRFLAQMHRAVSCSPPPPLPLESYIYNVLYEVPLPASGRSLKFHGVYEPILCQRPGVGELPLADFPLADAFRLLGVENLVQLFTCVLLEMQILLYSQDYQRLMVVAEGITTLLFPFQWQHVYVPILPASLLHFLDAPVPYLMGLQSKEGTDRSKLELPQEANLCFVDIDNHCIELPEDFPQFPNRSEFIQELSEVLLSFGQSPEGGSSSPEPAVMSLQTSVLEKELKSTSLRELVDDKTNGNLGGEALDVLELLQGNPTLERLQALAKRTGVKVARLEALAAGQKGDEGVGGRSPVEEEELRNAKLNVQLREVFAARFATMFADYESFVIQNSPDLESWLTNREQMHNFDKASFLSDQPEPYLPFLSHFIETQMFATFIDNKIMSQWEEKEPLLRVFDGRIEKARLYNVRAPSLRSSVYQKCTFLKESAQAIEQRLRKIDHTAIHPHLLDMKIGQGKYQQGFFPKLQADVLASGPTSNKWSNRTCSTQRRVERHRQQNEHLVLDNELKEKYMQEARNLGKNLRQPKLSDLSPAVIAQTNWKFVEGLLKECKMKTKRMLVEKMGREAVELGHGEANITGLEENTLIASLCDLLERIWSHGLQVKQGKSALWSHLLHYQAREEKNEQQLESPVSNGQERRKTESSVGLPGLRVSVIQDMRHIQNMAEIKTDVGRARAWIRLSLEKKLLSQHLKQLLSNQALTKKLYKRYAFLRCEEEKEQFLFHLLSLNAVDYFCFTSVFTTIMIPYRAVIIPIKKLSNAMTTSNPWLCVSGELGDSGILQITKNILEMTFDCQNLGKLTTVQLGHDNSGLLAKWLVDCVMVRNEITGHTYKFPCGRWLGKGVDDGSLERVLIGEFVVPCGDDEGGRGSKTPPLQRSPSQIRRISITSLTGKGNKPTTVQIQESIGEAVNNIIKHFHKPEKERGSLTVLLCGEGGLVWALEQFFHHGFRSARIFQKNVFVWDFFERIVAFMENRDQTGDLQESPEPLSLNSESLCRYVNAINNMPRNIGKDGKFQLLVCLGARDRLLPQWLPLLAESPVITRMYEENALLRDKLTVSSLLGVLETLHDFPITLETSLTKSVEL.

Residues 53 to 270 (ATAAGENFDQ…EVPLPASGRS (218 aa)) enclose the uDENN domain. Residues 154-165 (QAEHNTSAQNCT) are compositionally biased toward polar residues. Residues 154 to 201 (QAEHNTSAQNCTSSSSSSSSSSSSSSMDSLSSSLDDVDSPSAHGGRRT) form a disordered region. Low complexity predominate over residues 166-187 (SSSSSSSSSSSSSSMDSLSSSL). Positions 289–452 (ELPLADFPLA…AVMSLQTSVL (164 aa)) constitute a cDENN domain. Residues 454–619 (KELKSTSLRE…DNKIMSQWEE (166 aa)) form the dDENN domain. The RUN 1 domain occupies 809-969 (LEENTLIASL…DYFCFTSVFT (161 aa)). A disordered region spans residues 854–874 (EQQLESPVSNGQERRKTESSV). A helical membrane pass occupies residues 962–982 (FCFTSVFTTIMIPYRAVIIPI). One can recognise a PLAT domain in the interval 973–1081 (IPYRAVIIPI…DDGSLERVLI (109 aa)). The region spanning 1155 to 1306 (TVLLCGEGGL…FPITLETSLT (152 aa)) is the RUN 2 domain.

Belongs to the RAB6IP1 family.

The protein localises to the membrane. Its function is as follows. Guanine nucleotide exchange factor (GEF) which may activate the small GTPases Rab. May promote the exchange of GDP to GTP, converting inactive GDP-bound Rab proteins into their active GTP-bound form. This is DENN domain-containing protein 5B (dennd5b) from Danio rerio (Zebrafish).